The primary structure comprises 257 residues: tRNA (guanine-N(1)-)-methyltransferase (257 aa).

S-adenosyl-L-methionine contacts are provided by residues glycine 117 and 137-142 (LGDFVL).

It belongs to the RNA methyltransferase TrmD family. As to quaternary structure, homodimer.

The protein localises to the cytoplasm. The enzyme catalyses guanosine(37) in tRNA + S-adenosyl-L-methionine = N(1)-methylguanosine(37) in tRNA + S-adenosyl-L-homocysteine + H(+). Its function is as follows. Specifically methylates guanosine-37 in various tRNAs. This Bordetella pertussis (strain Tohama I / ATCC BAA-589 / NCTC 13251) protein is tRNA (guanine-N(1)-)-methyltransferase.